The following is a 459-amino-acid chain: Argininosuccinate lyase (459 aa).

Belongs to the lyase 1 family. Argininosuccinate lyase subfamily.

The protein resides in the cytoplasm. It carries out the reaction 2-(N(omega)-L-arginino)succinate = fumarate + L-arginine. The protein operates within amino-acid biosynthesis; L-arginine biosynthesis; L-arginine from L-ornithine and carbamoyl phosphate: step 3/3. This chain is Argininosuccinate lyase, found in Photorhabdus laumondii subsp. laumondii (strain DSM 15139 / CIP 105565 / TT01) (Photorhabdus luminescens subsp. laumondii).